The primary structure comprises 609 residues: MKNLSFLINRRKENTSDSNVYPGKAKSHEPSWIEMDDQTKKDGLDIVHVEFSPDTRAPSDSNKVITEIFDATEDAKEADESERGMPLATALNTYPKAAAWSLLVSTTLIMEGYDTAILGAFYALPIFQRKFGSQNDKTGEWEISASWQIGLTLCYMAGEIVGLQLTGPSVDLVGNRYTLIIALFFLAAFTFILYFCNSLGMIAVGQALCGMPWGCFQCLTVSYASEICPLALRYYLTTYSNLCWLFGQLFAAGIMKNSQKKYADSELGYKLPFALQWILPVPLALGIFFAPESPWWLVKKGRFDEARRSLRRTLSGKGPEKEILVTLEVDKIKVTIDKEKRLTSKEGSYSDCFEDKINRRRTRITCLCWAGQATCGSILIGYSTYFYEKAGVSTEMSFTFSIIQYCLGICATFLSWWASKYFGRYDLYAFGLAFQTIVFFIIGGLGCSSTHGSKMGSGSLLMAVAFFYNLGIAPVVFCLVSEMPSSRLRTKTIILARNTYNVVSIICSVLILYQLNSKKWNWGAKSGFFWGVLCFCTLIWAVVDLPETAGKTFVEINELFKLGVSARKFKSTKVDPFVVKTPLKTSLITTPREISKLPLQRNSNVSHHL.

Residues 1–106 (MKNLSFLINR…AAAWSLLVST (106 aa)) lie on the Cytoplasmic side of the membrane. Residues 107–127 (TLIMEGYDTAILGAFYALPIF) form a helical membrane-spanning segment. Topologically, residues 128-142 (QRKFGSQNDKTGEWE) are extracellular. Residues 143-163 (ISASWQIGLTLCYMAGEIVGL) traverse the membrane as a helical segment. At 164 to 178 (QLTGPSVDLVGNRYT) the chain is on the cytoplasmic side. A helical membrane pass occupies residues 179–199 (LIIALFFLAAFTFILYFCNSL). Residue G200 is a topological domain, extracellular. Residues 201-221 (MIAVGQALCGMPWGCFQCLTV) form a helical membrane-spanning segment. The Cytoplasmic segment spans residues 222-234 (SYASEICPLALRY). The helical transmembrane segment at 235-255 (YLTTYSNLCWLFGQLFAAGIM) threads the bilayer. Residues 256 to 270 (KNSQKKYADSELGYK) are Extracellular-facing. A helical membrane pass occupies residues 271 to 291 (LPFALQWILPVPLALGIFFAP). Residues 292 to 363 (ESPWWLVKKG…EDKINRRRTR (72 aa)) lie on the Cytoplasmic side of the membrane. A helical membrane pass occupies residues 364 to 384 (ITCLCWAGQATCGSILIGYST). At 385 to 397 (YFYEKAGVSTEMS) the chain is on the extracellular side. The helical transmembrane segment at 398 to 418 (FTFSIIQYCLGICATFLSWWA) threads the bilayer. At 419-426 (SKYFGRYD) the chain is on the cytoplasmic side. Residues 427 to 447 (LYAFGLAFQTIVFFIIGGLGC) traverse the membrane as a helical segment. At 448–459 (SSTHGSKMGSGS) the chain is on the extracellular side. Residues 460-480 (LLMAVAFFYNLGIAPVVFCLV) traverse the membrane as a helical segment. The Cytoplasmic segment spans residues 481–492 (SEMPSSRLRTKT). The helical transmembrane segment at 493-513 (IILARNTYNVVSIICSVLILY) threads the bilayer. The Extracellular segment spans residues 514 to 525 (QLNSKKWNWGAK). The chain crosses the membrane as a helical span at residues 526 to 546 (SGFFWGVLCFCTLIWAVVDLP). The Cytoplasmic portion of the chain corresponds to 547 to 609 (ETAGKTFVEI…QRNSNVSHHL (63 aa)).

It belongs to the major facilitator superfamily. Sugar transporter (TC 2.A.1.1) family.

The protein localises to the cell membrane. High-affinity uptake of maltose and maltotriose. Also transports alpha-methylglucoside, glucose and turanose but not melezitose or trehalose. In Saccharomyces cerevisiae (strain ATCC 204508 / S288c) (Baker's yeast), this protein is Alpha-glucosides permease MPH2 (MPH2).